The chain runs to 58 residues: UPF0391 membrane protein Sputcn32_1322 (58 aa).

The next 2 membrane-spanning stretches (helical) occupy residues 6-26 (LMFLVVAIIAGLFGFTGIAGA) and 28-48 (AGIAKIIFFLFIVLLVISLLV).

The protein belongs to the UPF0391 family.

Its subcellular location is the cell membrane. The protein is UPF0391 membrane protein Sputcn32_1322 of Shewanella putrefaciens (strain CN-32 / ATCC BAA-453).